A 109-amino-acid polypeptide reads, in one-letter code: Ubiquitin-related modifier 1 homolog (109 aa).

Position 109 is a 1-thioglycine (glycine 109). A Glycyl lysine isopeptide (Gly-Lys) (interchain with K-? in acceptor proteins) cross-link involves residue glycine 109.

Belongs to the URM1 family. In terms of processing, C-terminal thiocarboxylation occurs in 2 steps, it is first acyl-adenylated (-COAMP) via the hesA/moeB/thiF part of the MOCS3 homolog, then thiocarboxylated (-COSH) via the rhodanese domain of the MOCS3 homolog.

Its subcellular location is the cytoplasm. It participates in tRNA modification; 5-methoxycarbonylmethyl-2-thiouridine-tRNA biosynthesis. Its function is as follows. Acts as a sulfur carrier required for 2-thiolation of mcm(5)S(2)U at tRNA wobble positions of cytosolic tRNA(Lys), tRNA(Glu) and tRNA(Gln). Serves as sulfur donor in tRNA 2-thiolation reaction by being thiocarboxylated (-COSH) at its C-terminus by MOCS3. The sulfur is then transferred to tRNA to form 2-thiolation of mcm(5)S(2)U. Also acts as a ubiquitin-like protein (UBL) that is covalently conjugated via an isopeptide bond to lysine residues of target proteins. The thiocarboxylated form serves as substrate for conjugation and oxidative stress specifically induces the formation of UBL-protein conjugates. The protein is Ubiquitin-related modifier 1 homolog of Anopheles gambiae (African malaria mosquito).